Here is a 247-residue protein sequence, read N- to C-terminus: PF03932 family protein CutC (247 aa).

The protein belongs to the CutC family.

The protein resides in the cytoplasm. This is PF03932 family protein CutC from Aliivibrio fischeri (strain MJ11) (Vibrio fischeri).